We begin with the raw amino-acid sequence, 321 residues long: Thylakoid-associated protein sll1697 (321 aa).

The protein localises to the cellular thylakoid membrane. The protein is Thylakoid-associated protein sll1697 of Synechocystis sp. (strain ATCC 27184 / PCC 6803 / Kazusa).